The following is a 306-amino-acid chain: Recombination-associated protein RdgC (306 aa).

It belongs to the RdgC family.

It localises to the cytoplasm. It is found in the nucleoid. In terms of biological role, may be involved in recombination. The protein is Recombination-associated protein RdgC of Pseudomonas putida (strain ATCC 47054 / DSM 6125 / CFBP 8728 / NCIMB 11950 / KT2440).